The sequence spans 214 residues: Proteasome subunit beta (214 aa).

A propeptide spans 1–11 (removed in mature form; by autocatalysis); that stretch reads MLDTSQEIMKG. The active-site Nucleophile is the Thr-12.

This sequence belongs to the peptidase T1B family. The 20S proteasome core is composed of 14 alpha and 14 beta subunits that assemble into four stacked heptameric rings, resulting in a barrel-shaped structure. The two inner rings, each composed of seven catalytic beta subunits, are sandwiched by two outer rings, each composed of seven alpha subunits. The catalytic chamber with the active sites is on the inside of the barrel. Has a gated structure, the ends of the cylinder being occluded by the N-termini of the alpha-subunits. Is capped at one or both ends by the proteasome regulatory ATPase, PAN.

The protein localises to the cytoplasm. It carries out the reaction Cleavage of peptide bonds with very broad specificity.. The formation of the proteasomal ATPase PAN-20S proteasome complex, via the docking of the C-termini of PAN into the intersubunit pockets in the alpha-rings, triggers opening of the gate for substrate entry. Interconversion between the open-gate and close-gate conformations leads to a dynamic regulation of the 20S proteasome proteolysis activity. Functionally, component of the proteasome core, a large protease complex with broad specificity involved in protein degradation. The sequence is that of Proteasome subunit beta from Methanoculleus marisnigri (strain ATCC 35101 / DSM 1498 / JR1).